Consider the following 144-residue polypeptide: Large ribosomal subunit protein uL11 (144 aa).

This sequence belongs to the universal ribosomal protein uL11 family. Part of the ribosomal stalk of the 50S ribosomal subunit. Interacts with L10 and the large rRNA to form the base of the stalk. L10 forms an elongated spine to which L12 dimers bind in a sequential fashion forming a multimeric L10(L12)X complex. In terms of processing, one or more lysine residues are methylated.

Its function is as follows. Forms part of the ribosomal stalk which helps the ribosome interact with GTP-bound translation factors. The protein is Large ribosomal subunit protein uL11 of Streptomyces avermitilis (strain ATCC 31267 / DSM 46492 / JCM 5070 / NBRC 14893 / NCIMB 12804 / NRRL 8165 / MA-4680).